The chain runs to 128 residues: Transcription antitermination protein NusB (128 aa).

This sequence belongs to the NusB family.

Involved in transcription antitermination. Required for transcription of ribosomal RNA (rRNA) genes. Binds specifically to the boxA antiterminator sequence of the ribosomal RNA (rrn) operons. The polypeptide is Transcription antitermination protein NusB (Listeria welshimeri serovar 6b (strain ATCC 35897 / DSM 20650 / CCUG 15529 / CIP 8149 / NCTC 11857 / SLCC 5334 / V8)).